A 244-amino-acid chain; its full sequence is Protein crossbronx (244 aa).

One can recognise a UBC core domain in the interval 20–176 (QQEYKILAEY…VQENIKESKE (157 aa)). Positions 209–244 (AGRSKQTEPSAQQGNGGHATGLSWVKEGEFKPLSIE) are disordered.

The protein belongs to the ubiquitin-conjugating enzyme family. FTS subfamily.

The protein is Protein crossbronx (cbx) of Drosophila simulans (Fruit fly).